Consider the following 258-residue polypeptide: Phosphate import ATP-binding protein PstB (258 aa).

One can recognise an ABC transporter domain in the interval 5–247; that stretch reads LDLKDVNIYY…EKIFSNPTQK (243 aa). Residue 37–44 coordinates ATP; that stretch reads GPSGCGKS.

The protein belongs to the ABC transporter superfamily. Phosphate importer (TC 3.A.1.7) family. In terms of assembly, the complex is composed of two ATP-binding proteins (PstB), two transmembrane proteins (PstC and PstA) and a solute-binding protein (PstS).

The protein localises to the cell membrane. It catalyses the reaction phosphate(out) + ATP + H2O = ADP + 2 phosphate(in) + H(+). Functionally, part of the ABC transporter complex PstSACB involved in phosphate import. Responsible for energy coupling to the transport system. The sequence is that of Phosphate import ATP-binding protein PstB from Rhodococcus jostii (strain RHA1).